A 705-amino-acid chain; its full sequence is tRNA 5-methylaminomethyl-2-thiouridine biosynthesis bifunctional protein MnmC (705 aa).

Positions 1 to 241 (MTIKTADIQF…KREMLAGIIA (241 aa)) are tRNA (mnm(5)s(2)U34)-methyltransferase. The segment at 289–705 (IGAGIAGASM…LIRQLIRREV (417 aa)) is FAD-dependent cmnm(5)s(2)U34 oxidoreductase.

The protein in the N-terminal section; belongs to the methyltransferase superfamily. tRNA (mnm(5)s(2)U34)-methyltransferase family. It in the C-terminal section; belongs to the DAO family. It depends on FAD as a cofactor.

Its subcellular location is the cytoplasm. It catalyses the reaction 5-aminomethyl-2-thiouridine(34) in tRNA + S-adenosyl-L-methionine = 5-methylaminomethyl-2-thiouridine(34) in tRNA + S-adenosyl-L-homocysteine + H(+). In terms of biological role, catalyzes the last two steps in the biosynthesis of 5-methylaminomethyl-2-thiouridine (mnm(5)s(2)U) at the wobble position (U34) in tRNA. Catalyzes the FAD-dependent demodification of cmnm(5)s(2)U34 to nm(5)s(2)U34, followed by the transfer of a methyl group from S-adenosyl-L-methionine to nm(5)s(2)U34, to form mnm(5)s(2)U34. The protein is tRNA 5-methylaminomethyl-2-thiouridine biosynthesis bifunctional protein MnmC of Pseudoalteromonas atlantica (strain T6c / ATCC BAA-1087).